The chain runs to 569 residues: Sialic acid-binding Ig-like lectin 5 (569 aa).

An N-terminal signal peptide occupies residues 1-16; that stretch reads MRWAWLLPLLWAGCLA. The Extracellular segment spans residues 17-439; the sequence is TDGYSLSVTG…KSETSRGTVL (423 aa). The 99-residue stretch at 18–116 folds into the Ig-like V-type domain; that stretch reads DGYSLSVTGS…DTGTYFFRLD (99 aa). Intrachain disulfides connect cysteine 35-cysteine 163, cysteine 40-cysteine 96, cysteine 157-cysteine 206, and cysteine 265-cysteine 308. N-linked (GlcNAc...) asparagine glycosylation is present at asparagine 95. N-acetylneuraminate contacts are provided by arginine 114, lysine 120, and serine 122. Ig-like C2-type domains lie at 139–224 and 229–324; these read PNIQ…QQLS and PQKM…VSLS. 3 N-linked (GlcNAc...) asparagine glycosylation sites follow: asparagine 151, asparagine 200, and asparagine 203. N-linked (GlcNAc...) asparagine glycans are attached at residues asparagine 369, asparagine 372, and asparagine 387. Residues 440 to 460 traverse the membrane as a helical segment; sequence GAIWGAGLMALLAVCLCLIFF. The Cytoplasmic segment spans residues 461-569; the sequence is TVKVLRKKSA…VYTEIKIHKC (109 aa). The segment at 508–556 is disordered; that stretch reads HLNEPGSQTQKEQPPLATVPDTQKDEPELHYASLSFQGPMPPKPQNTEA. Residues 536-541 carry the ITIM motif motif; that stretch reads LHYASL. The SLAM-like motif motif lies at 559–564; that stretch reads SVYTEI.

It belongs to the immunoglobulin superfamily. SIGLEC (sialic acid binding Ig-like lectin) family. In terms of tissue distribution, predominantly expressed by immature monocytic/myeloid lineage cells in bone marrow. Also found at lower levels in mature neutrophils and monocytes.

It is found in the membrane. Putative adhesion molecule that mediates sialic-acid dependent binding to cells. Preferentially binds to alpha-2,3-linked sialic acid. The sialic acid recognition site may be masked by cis interactions with sialic acids on the same cell surface. The chain is Sialic acid-binding Ig-like lectin 5 (Siglec5) from Mus musculus (Mouse).